The chain runs to 60 residues: Hemocyte defensin Cg-Defh2 (60 aa).

A signal peptide spans Leu-1–Ala-17. Beta-D-GlcNAc-(1-&gt;4)-Mur2Ac(oyl-L-Ala-gamma-D-Glu-L-Lys-D-Ala-D-Ala)-di-trans,octa-cis-undecaprenyl diphosphate-binding residues include Phe-19, Gly-20, and Cys-21. Disulfide bonds link Cys-21–Cys-42, Cys-28–Cys-51, Cys-32–Cys-53, and Cys-37–Cys-56. The tract at residues Pro-22 to Gln-25 is binds to membrane interface. His-31 is a binding site for beta-D-GlcNAc-(1-&gt;4)-Mur2Ac(oyl-L-Ala-gamma-D-Glu-L-Lys-D-Ala-D-Ala)-di-trans,octa-cis-undecaprenyl diphosphate. The interval Asp-43–Leu-49 is binds to membrane interface. Position 51 (Cys-51) interacts with beta-D-GlcNAc-(1-&gt;4)-Mur2Ac(oyl-L-Ala-gamma-D-Glu-L-Lys-D-Ala-D-Ala)-di-trans,octa-cis-undecaprenyl diphosphate.

This sequence belongs to the invertebrate defensin family. In terms of tissue distribution, expressed in hemocytes.

It localises to the secreted. It is found in the target cell membrane. Functionally, antibacterial peptide mostly active against Gram-positive bacteria. It acts by selectively inhibiting peptidoglycan biosynthesis through complex formation with the cell wall precursor lipid II (1:1 molar ratio) thus inhibiting cell wall synthesis. It does not disrupt cell membranes. Is noticeably more potent than Cg-Defh1. The chain is Hemocyte defensin Cg-Defh2 from Magallana gigas (Pacific oyster).